The primary structure comprises 980 residues: Putative formate dehydrogenase YrhE (980 aa).

One can recognise a 2Fe-2S ferredoxin-type domain in the interval 5–81; that stretch reads KSISVRVDGT…GMSIDLSGNR (77 aa). [2Fe-2S] cluster-binding residues include Cys39, Cys50, Cys53, and Cys65. In terms of domain architecture, 4Fe-4S His(Cys)3-ligated-type spans 81–121; that stretch reads RVKEAQTEAMDRLLENHLLYCTVCDNNNGNCTLHNTAEMMG. 16 residues coordinate [4Fe-4S] cluster: His97, Cys101, Cys104, Cys111, Cys153, Cys156, Cys159, Cys163, Cys196, Cys199, Cys202, Cys206, Cys270, Cys273, Cys277, and Cys305. 2 4Fe-4S ferredoxin-type domains span residues 144-171 and 187-216; these read PFYR…VNET and EGVP…EKSM. A formate dehydrogenase region spans residues 258–980; sequence MRETRTKKTK…NRPGYVHLTD (723 aa). In terms of domain architecture, 4Fe-4S Mo/W bis-MGD-type spans 263-319; it reads TKKTKTVCTFCGVGCSFEVWTKGRDILKIQPVSDAPVNAISTCVKGKFGWDFVNSKE. Residues 944-980 are disordered; sequence ETAPLPKTNPRNKKRHPQNGVEAERKWNRPGYVHLTD.

In the C-terminal section; belongs to the prokaryotic molybdopterin-containing oxidoreductase family. Requires [2Fe-2S] cluster as cofactor. [4Fe-4S] cluster serves as cofactor. The cofactor is Mo-bis(molybdopterin guanine dinucleotide).

The catalysed reaction is formate + NAD(+) = CO2 + NADH. The polypeptide is Putative formate dehydrogenase YrhE (yrhE) (Bacillus subtilis (strain 168)).